Consider the following 173-residue polypeptide: Protein-export protein SecB (173 aa).

The disordered stretch occupies residues 148–173 (QQQKQRREQGTSDSAPSGSPDNGGRQ). Residues 158–167 (TSDSAPSGSP) are compositionally biased toward polar residues.

The protein belongs to the SecB family. As to quaternary structure, homotetramer, a dimer of dimers. One homotetramer interacts with 1 SecA dimer.

It localises to the cytoplasm. In terms of biological role, one of the proteins required for the normal export of preproteins out of the cell cytoplasm. It is a molecular chaperone that binds to a subset of precursor proteins, maintaining them in a translocation-competent state. It also specifically binds to its receptor SecA. The protein is Protein-export protein SecB of Halorhodospira halophila (strain DSM 244 / SL1) (Ectothiorhodospira halophila (strain DSM 244 / SL1)).